We begin with the raw amino-acid sequence, 490 residues long: Cytochrome P450 2C26 (490 aa).

Cys435 is a heme binding site.

Belongs to the cytochrome P450 family. Requires heme as cofactor.

Its subcellular location is the endoplasmic reticulum membrane. The protein resides in the microsome membrane. The enzyme catalyses an organic molecule + reduced [NADPH--hemoprotein reductase] + O2 = an alcohol + oxidized [NADPH--hemoprotein reductase] + H2O + H(+). Functionally, catalyzes the hydroxylation of tolbutamide and the N-demethylation of aminopyrine and benzphetamine. The protein is Cytochrome P450 2C26 (CYP2C26) of Mesocricetus auratus (Golden hamster).